The chain runs to 265 residues: Indole-3-glycerol phosphate synthase (265 aa).

Belongs to the TrpC family.

It carries out the reaction 1-(2-carboxyphenylamino)-1-deoxy-D-ribulose 5-phosphate + H(+) = (1S,2R)-1-C-(indol-3-yl)glycerol 3-phosphate + CO2 + H2O. The protein operates within amino-acid biosynthesis; L-tryptophan biosynthesis; L-tryptophan from chorismate: step 4/5. The chain is Indole-3-glycerol phosphate synthase from Xanthomonas euvesicatoria pv. vesicatoria (strain 85-10) (Xanthomonas campestris pv. vesicatoria).